Reading from the N-terminus, the 305-residue chain is C alpha-dehydrogenase (305 aa).

10 to 34 is a binding site for NAD(+); that stretch reads FITGGASGAGFGQAKVFGQAGAKIV. Residue serine 144 coordinates substrate. Catalysis depends on tyrosine 157, which acts as the Proton acceptor.

The protein belongs to the short-chain dehydrogenases/reductases (SDR) family.

It functions in the pathway secondary metabolite metabolism; lignin degradation. Its function is as follows. Catalyzes the C alpha dehydrogenation of arylglycerol-beta-aryl ether (C alpha alcohol type) (compound IV). This Sphingobium sp. (strain NBRC 103272 / SYK-6) protein is C alpha-dehydrogenase (ligD).